We begin with the raw amino-acid sequence, 559 residues long: Kelch repeat and BTB domain-containing protein 2 (559 aa).

The BTB domain occupies 26-95; it reads CDVIITIGDG…LYNRHISSMN (70 aa). A BACK domain is found at 128–223; sequence CIYIYHRLYE…CIDIQNLDKK (96 aa). 3 Kelch repeats span residues 305–352, 353–399, and 401–463; these read EIII…VIDD, MIYA…VFDQ, and IYII…SHKD.

As to quaternary structure, interacts (via BTB domain) with host CUL3.

The protein resides in the host cytoplasm. Probable substrate-specific adapter of CUL3-containing E3 ubiquitin-protein ligases which mediate the ubiquitination and subsequent proteasomal degradation of host target proteins. In Mus musculus (Mouse), this protein is Kelch repeat and BTB domain-containing protein 2 (KBTB2).